The primary structure comprises 387 residues: Phosphoglycerate kinase (387 aa).

Substrate-binding positions include 21–23, Arg36, 59–62, Arg113, and Arg146; these read DLN and HLGR. ATP is bound by residues Lys197, Glu314, and 340 to 343; that span reads GGDT.

It belongs to the phosphoglycerate kinase family. Monomer.

The protein resides in the cytoplasm. It carries out the reaction (2R)-3-phosphoglycerate + ATP = (2R)-3-phospho-glyceroyl phosphate + ADP. The protein operates within carbohydrate degradation; glycolysis; pyruvate from D-glyceraldehyde 3-phosphate: step 2/5. This Cronobacter sakazakii (strain ATCC BAA-894) (Enterobacter sakazakii) protein is Phosphoglycerate kinase.